The chain runs to 455 residues: Chromosomal replication initiator protein DnaA (455 aa).

The interval 1 to 75 (MLERNDLWNL…AMQATNEQIR (75 aa)) is domain I, interacts with DnaA modulators. Positions 75–117 (RPVMITEEERQQLTRDKDSQVTTGNVAGQQPTTATTPTFMRET) are domain II. The span at 84 to 93 (RQQLTRDKDS) shows a compositional bias: basic and acidic residues. The interval 84–107 (RQQLTRDKDSQVTTGNVAGQQPTT) is disordered. A domain III, AAA+ region region spans residues 118–334 (KLNPKYTFDT…GALARVQAYS (217 aa)). Residues glycine 162, glycine 164, lysine 165, and threonine 166 each coordinate ATP. Positions 335–455 (RLNNSPITTS…VGDLTGQLKS (121 aa)) are domain IV, binds dsDNA.

This sequence belongs to the DnaA family. Oligomerizes as a right-handed, spiral filament on DNA at oriC.

It localises to the cytoplasm. Its function is as follows. Plays an essential role in the initiation and regulation of chromosomal replication. ATP-DnaA binds to the origin of replication (oriC) to initiate formation of the DNA replication initiation complex once per cell cycle. Binds the DnaA box (a 9 base pair repeat at the origin) and separates the double-stranded (ds)DNA. Forms a right-handed helical filament on oriC DNA; dsDNA binds to the exterior of the filament while single-stranded (ss)DNA is stabiized in the filament's interior. The ATP-DnaA-oriC complex binds and stabilizes one strand of the AT-rich DNA unwinding element (DUE), permitting loading of DNA polymerase. After initiation quickly degrades to an ADP-DnaA complex that is not apt for DNA replication. Binds acidic phospholipids. In Lactiplantibacillus plantarum (strain ATCC BAA-793 / NCIMB 8826 / WCFS1) (Lactobacillus plantarum), this protein is Chromosomal replication initiator protein DnaA.